We begin with the raw amino-acid sequence, 372 residues long: DNA-directed RNA polymerase subunit alpha (372 aa).

Positions 1 to 268 (MIFDEDSNSV…DQFQPFINFD (268 aa)) are alpha N-terminal domain (alpha-NTD). An alpha C-terminal domain (alpha-CTD) region spans residues 280-372 (KDALPYDSNL…ESLSKQYSEE (93 aa)).

The protein belongs to the RNA polymerase alpha chain family. As to quaternary structure, homodimer. The RNAP catalytic core consists of 2 alpha, 1 beta, 1 beta' and 1 omega subunit. When a sigma factor is associated with the core the holoenzyme is formed, which can initiate transcription.

The enzyme catalyses RNA(n) + a ribonucleoside 5'-triphosphate = RNA(n+1) + diphosphate. DNA-dependent RNA polymerase catalyzes the transcription of DNA into RNA using the four ribonucleoside triphosphates as substrates. This chain is DNA-directed RNA polymerase subunit alpha, found in Ehrlichia canis (strain Jake).